The following is a 138-amino-acid chain: Large ribosomal subunit protein uL16 (138 aa).

Belongs to the universal ribosomal protein uL16 family. As to quaternary structure, part of the 50S ribosomal subunit.

Binds 23S rRNA and is also seen to make contacts with the A and possibly P site tRNAs. The protein is Large ribosomal subunit protein uL16 of Chlamydia caviae (strain ATCC VR-813 / DSM 19441 / 03DC25 / GPIC) (Chlamydophila caviae).